The chain runs to 184 residues: Endoribonuclease YbeY (184 aa).

2 stretches are compositionally biased toward acidic residues: residues 1-11 and 19-29; these read MTVEVGADENP and DGAGDESDDED. The tract at residues 1 to 37 is disordered; the sequence is MTVEVGADENPDFAHDETDGAGDESDDEDAQGRDPEL. The Zn(2+) site is built by His-146, His-150, and His-156.

It belongs to the endoribonuclease YbeY family. Requires Zn(2+) as cofactor.

It localises to the cytoplasm. In terms of biological role, single strand-specific metallo-endoribonuclease involved in late-stage 70S ribosome quality control and in maturation of the 3' terminus of the 16S rRNA. This chain is Endoribonuclease YbeY, found in Burkholderia mallei (strain ATCC 23344).